We begin with the raw amino-acid sequence, 163 residues long: Homoaconitase small subunit (163 aa).

The protein belongs to the LeuD family. In terms of assembly, heterodimer of HacA and HacB.

The enzyme catalyses (2R,3S)-homoisocitrate = cis-homoaconitate + H2O. The protein operates within amino-acid biosynthesis; L-lysine biosynthesis via AAA pathway; L-alpha-aminoadipate from 2-oxoglutarate: step 3/5. Its activity is regulated as follows. Is not inhibited by lysine. Functionally, catalyzes the reversible hydration of cis-homoaconitate ((Z)-but-1-ene-1,2,4-tricarboxylate) to homoisocitrate ((1R,2S)-1-hydroxybutane-1,2,4-tricarboxylate). Can catalyze neither the dehydration of (R)-homocitrate ((2R)-2-hydroxybutane-1,2,4-tricarboxylate) into cis-homoaconitate in vitro, nor the reverse reaction. Is not active toward (S)-homocitrate, cis-aconitate or citrate as substrate. In Thermus thermophilus (strain ATCC BAA-163 / DSM 7039 / HB27), this protein is Homoaconitase small subunit (hacB).